Here is a 765-residue protein sequence, read N- to C-terminus: LPS-assembly protein LptD (765 aa).

A signal peptide spans 1-18; that stretch reads MQIRYFLALSLLPQLVLA.

It belongs to the LptD family. As to quaternary structure, component of the lipopolysaccharide transport and assembly complex. Interacts with LptE and LptA.

It is found in the cell outer membrane. Functionally, together with LptE, is involved in the assembly of lipopolysaccharide (LPS) at the surface of the outer membrane. In Shewanella sp. (strain MR-4), this protein is LPS-assembly protein LptD.